The following is a 250-amino-acid chain: 2,5-dichloro-2,5-cyclohexadiene-1,4-diol dehydrogenase LinX (250 aa).

NAD(+) is bound by residues Asp-38, Asp-64, Val-65, Tyr-156, Lys-160, Thr-191, and Thr-194. Tyr-156 (proton acceptor) is an active-site residue.

Belongs to the short-chain dehydrogenases/reductases (SDR) family.

It carries out the reaction 2,5-dichlorocyclohexa-2,5-dien-1,4-diol + NAD(+) = 2,5-dichlorohydroquinone + NADH + H(+). Catalyzes the degradation of 2,5-dichloro-2,5-cyclohexadiene-1,4-diol (2,5-DDOL) into 2,5-dichlorohydroquinone (2,5-DCHQ) in vitro. LinX appears not to be involved in gamma-hexachlorocyclohexane (gamma-HCH) degradation pathway, in contrast to LinC which has the same enzymatic activity. In Sphingobium indicum (strain DSM 16412 / CCM 7286 / MTCC 6364 / B90A), this protein is 2,5-dichloro-2,5-cyclohexadiene-1,4-diol dehydrogenase LinX.